The chain runs to 682 residues: Potassium-transporting ATPase ATP-binding subunit (682 aa).

4 helical membrane passes run 34-54 (PVMFIVWIGSLLTTCISIAMA), 62-82 (ALFSAAISGWLWVTVLFANFA), 219-239 (IALTILLIALTIVFLLATATL), and 254-274 (VLVALLVCLIPTTIGGLLSAI). The 4-aspartylphosphate intermediate role is filled by aspartate 307. ATP is bound by residues aspartate 344, glutamate 348, 377-384 (FTAQSRMS), and lysine 395. Mg(2+) is bound by residues aspartate 518 and aspartate 522. The next 3 helical transmembrane spans lie at 588-608 (FAIIPAAFAATYPQLNALNIM), 616-636 (AILSAVIFNALIIVFLIPLAL), and 656-676 (IYGLGGLLVPFIGIKVIDLLL).

The protein belongs to the cation transport ATPase (P-type) (TC 3.A.3) family. Type IA subfamily. In terms of assembly, the system is composed of three essential subunits: KdpA, KdpB and KdpC.

The protein localises to the cell inner membrane. The catalysed reaction is K(+)(out) + ATP + H2O = K(+)(in) + ADP + phosphate + H(+). Its function is as follows. Part of the high-affinity ATP-driven potassium transport (or Kdp) system, which catalyzes the hydrolysis of ATP coupled with the electrogenic transport of potassium into the cytoplasm. This subunit is responsible for energy coupling to the transport system and for the release of the potassium ions to the cytoplasm. The polypeptide is Potassium-transporting ATPase ATP-binding subunit (Escherichia coli O8 (strain IAI1)).